The primary structure comprises 295 residues: uncharacterized protein (295 aa).

The signal sequence occupies residues Met1–Ala26.

This is an uncharacterized protein from Archaeoglobus fulgidus (strain ATCC 49558 / DSM 4304 / JCM 9628 / NBRC 100126 / VC-16).